The chain runs to 632 residues: Mitoguardin 1 (632 aa).

Residues 70–90 (PVAKKLFVVTAVSAISVIFLA) traverse the membrane as a helical segment. A phosphoserine mark is found at S289 and S293.

Belongs to the mitoguardin family. Homodimer and heterodimer; forms heterodimers with MIGA2. Interacts with PLD6/MitoPLD.

It localises to the mitochondrion outer membrane. In terms of biological role, regulator of mitochondrial fusion: acts by forming homo- and heterodimers at the mitochondrial outer membrane and facilitating the formation of PLD6/MitoPLD dimers. May act by regulating phospholipid metabolism via PLD6/MitoPLD. The protein is Mitoguardin 1 of Homo sapiens (Human).